Consider the following 444-residue polypeptide: Tubulin beta chain (444 aa).

8 residues coordinate GTP: glutamine 11, glutamate 69, serine 138, glycine 142, threonine 143, glycine 144, asparagine 204, and asparagine 226. Glutamate 69 is a binding site for Mg(2+).

The protein belongs to the tubulin family. As to quaternary structure, dimer of alpha and beta chains. A typical microtubule is a hollow water-filled tube with an outer diameter of 25 nm and an inner diameter of 15 nM. Alpha-beta heterodimers associate head-to-tail to form protofilaments running lengthwise along the microtubule wall with the beta-tubulin subunit facing the microtubule plus end conferring a structural polarity. Microtubules usually have 13 protofilaments but different protofilament numbers can be found in some organisms and specialized cells. The cofactor is Mg(2+).

The protein localises to the cytoplasm. It is found in the cytoskeleton. In terms of biological role, tubulin is the major constituent of microtubules, a cylinder consisting of laterally associated linear protofilaments composed of alpha- and beta-tubulin heterodimers. Microtubules grow by the addition of GTP-tubulin dimers to the microtubule end, where a stabilizing cap forms. Below the cap, tubulin dimers are in GDP-bound state, owing to GTPase activity of alpha-tubulin. This is Tubulin beta chain from Euplotoides octocarinatus (Freshwater ciliate).